A 140-amino-acid chain; its full sequence is Nucleoside diphosphate kinase (140 aa).

The ATP site is built by K11, F59, R87, T93, R104, and N114. H117 (pros-phosphohistidine intermediate) is an active-site residue.

The protein belongs to the NDK family. As to quaternary structure, homotetramer. Mg(2+) serves as cofactor.

It is found in the cytoplasm. It catalyses the reaction a 2'-deoxyribonucleoside 5'-diphosphate + ATP = a 2'-deoxyribonucleoside 5'-triphosphate + ADP. The catalysed reaction is a ribonucleoside 5'-diphosphate + ATP = a ribonucleoside 5'-triphosphate + ADP. Functionally, major role in the synthesis of nucleoside triphosphates other than ATP. The ATP gamma phosphate is transferred to the NDP beta phosphate via a ping-pong mechanism, using a phosphorylated active-site intermediate. This is Nucleoside diphosphate kinase from Rhizobium johnstonii (strain DSM 114642 / LMG 32736 / 3841) (Rhizobium leguminosarum bv. viciae).